The sequence spans 907 residues: Clumping factor B (907 aa).

Positions 1–44 (MKKRIDYLSNKQNKYSIRRFTVGTTSVIVGATILFGIGNHQAQA) are cleaved as a signal peptide. Positions 15–26 (YSIRRFTVGTTS) match the YSIRK-G/S signaling motif motif. Composition is skewed to polar residues over residues 44–61 (ASEQ…NASA) and 68–101 (MIET…KPMS). The tract at residues 44 to 191 (ASEQSNDTTQ…AQGTSKPSVR (148 aa)) is disordered. The interval 45–542 (SEQSNDTTQS…GSADGDSAVN (498 aa)) is ligand binding A region. Positions 102–119 (TQTSNTTTTEPASTNETP) are enriched in low complexity. Residues 134–189 (QDQTVPQEANSQVDNKTTNDANSIATNSELKNPQTLDLPQSSPQTISNAQGTSKPS) show a composition bias toward polar residues. The MIDAS-like motif signature appears at 272–276 (DYSNS). The disordered stretch occupies residues 530-879 (YGGGSADGDS…ETGDKSENTN (350 aa)). A compositionally biased stretch (pro residues) spans 545 to 555 (DPTPGPPVDPE). Residues 556–831 (PSPDPEPEPS…SDSDSDSDSD (276 aa)) are compositionally biased toward acidic residues. The segment covering 835–846 (RVTPPNNEQKAP) has biased composition (polar residues). The span at 863–876 (HKTDALPETGDKSE) shows a compositional bias: basic and acidic residues. Positions 868-872 (LPETG) match the LPXTG sorting signal motif. Position 871 is a pentaglycyl murein peptidoglycan amidated threonine (Thr-871). Residues 872–907 (GDKSENTNATLFGAMMALLGSLLLFRKRKQDHKEKA) constitute a propeptide, removed by sortase.

Belongs to the serine-aspartate repeat-containing protein (SDr) family. Proteolytically cleaved by aureolysin (aur). This cleavage leads to the inactivation of ClfB.

Its subcellular location is the secreted. It localises to the cell wall. Its function is as follows. Cell surface-associated protein implicated in virulence by promoting bacterial attachment to both alpha- and beta-chains of human fibrinogen and inducing the formation of bacterial clumps. This Staphylococcus aureus (strain MW2) protein is Clumping factor B (clfB).